A 182-amino-acid chain; its full sequence is Large ribosomal subunit protein uL10 (182 aa).

The protein belongs to the universal ribosomal protein uL10 family. As to quaternary structure, part of the ribosomal stalk of the 50S ribosomal subunit. The N-terminus interacts with L11 and the large rRNA to form the base of the stalk. The C-terminus forms an elongated spine to which L12 dimers bind in a sequential fashion forming a multimeric L10(L12)X complex.

Functionally, forms part of the ribosomal stalk, playing a central role in the interaction of the ribosome with GTP-bound translation factors. The sequence is that of Large ribosomal subunit protein uL10 from Microcystis aeruginosa (strain NIES-843 / IAM M-2473).